Consider the following 380-residue polypeptide: Glucose-1-phosphate adenylyltransferase (380 aa).

Alpha-D-glucose 1-phosphate contacts are provided by residues Tyr100, Gly165, 180-181 (EK), and Ser191.

It belongs to the bacterial/plant glucose-1-phosphate adenylyltransferase family. As to quaternary structure, homotetramer.

The enzyme catalyses alpha-D-glucose 1-phosphate + ATP + H(+) = ADP-alpha-D-glucose + diphosphate. Its pathway is glycan biosynthesis; glycogen biosynthesis. In terms of biological role, involved in the biosynthesis of ADP-glucose, a building block required for the elongation reactions to produce glycogen. Catalyzes the reaction between ATP and alpha-D-glucose 1-phosphate (G1P) to produce pyrophosphate and ADP-Glc. In Clostridium acetobutylicum (strain ATCC 824 / DSM 792 / JCM 1419 / IAM 19013 / LMG 5710 / NBRC 13948 / NRRL B-527 / VKM B-1787 / 2291 / W), this protein is Glucose-1-phosphate adenylyltransferase.